A 66-amino-acid chain; its full sequence is Large ribosomal subunit protein bL35 (66 aa).

The segment covering 1–26 (MPKMKTHRGSAKRFKKTGSGKLKRSH) has biased composition (basic residues). Residues 1–48 (MPKMKTHRGSAKRFKKTGSGKLKRSHAYTSHLFANKSQKQKRKLRKSA) form a disordered region.

Belongs to the bacterial ribosomal protein bL35 family. As to quaternary structure, part of the 50S ribosomal subunit.

The chain is Large ribosomal subunit protein bL35 from Bacillus subtilis (strain 168).